A 398-amino-acid polypeptide reads, in one-letter code: 1-deoxy-D-xylulose 5-phosphate reductoisomerase (398 aa).

5 residues coordinate NADPH: Thr11, Gly12, Ser13, Ile14, and Asn125. Residue Lys126 participates in 1-deoxy-D-xylulose 5-phosphate binding. Glu127 is a binding site for NADPH. A Mn(2+)-binding site is contributed by Asp151. Positions 152, 153, 186, and 209 each coordinate 1-deoxy-D-xylulose 5-phosphate. Glu153 is a Mn(2+) binding site. Position 215 (Gly215) interacts with NADPH. 4 residues coordinate 1-deoxy-D-xylulose 5-phosphate: Ser222, Asn227, Lys228, and Glu231. Glu231 serves as a coordination point for Mn(2+).

The protein belongs to the DXR family. Mg(2+) is required as a cofactor. Requires Mn(2+) as cofactor.

It catalyses the reaction 2-C-methyl-D-erythritol 4-phosphate + NADP(+) = 1-deoxy-D-xylulose 5-phosphate + NADPH + H(+). The protein operates within isoprenoid biosynthesis; isopentenyl diphosphate biosynthesis via DXP pathway; isopentenyl diphosphate from 1-deoxy-D-xylulose 5-phosphate: step 1/6. Functionally, catalyzes the NADPH-dependent rearrangement and reduction of 1-deoxy-D-xylulose-5-phosphate (DXP) to 2-C-methyl-D-erythritol 4-phosphate (MEP). In Acinetobacter baylyi (strain ATCC 33305 / BD413 / ADP1), this protein is 1-deoxy-D-xylulose 5-phosphate reductoisomerase.